The chain runs to 257 residues: Enolase-phosphatase E1 (257 aa).

Positions 16 and 18 each coordinate Mg(2+). Substrate contacts are provided by residues 150–151 and K184; that span reads SS. Residue D209 coordinates Mg(2+).

It belongs to the HAD-like hydrolase superfamily. MasA/MtnC family. In terms of assembly, monomer. The cofactor is Mg(2+).

The protein resides in the cytoplasm. It localises to the nucleus. The catalysed reaction is 5-methylsulfanyl-2,3-dioxopentyl phosphate + H2O = 1,2-dihydroxy-5-(methylsulfanyl)pent-1-en-3-one + phosphate. The protein operates within amino-acid biosynthesis; L-methionine biosynthesis via salvage pathway; L-methionine from S-methyl-5-thio-alpha-D-ribose 1-phosphate: step 3/6. It participates in amino-acid biosynthesis; L-methionine biosynthesis via salvage pathway; L-methionine from S-methyl-5-thio-alpha-D-ribose 1-phosphate: step 4/6. In terms of biological role, bifunctional enzyme that catalyzes the enolization of 2,3-diketo-5-methylthiopentyl-1-phosphate (DK-MTP-1-P) into the intermediate 2-hydroxy-3-keto-5-methylthiopentenyl-1-phosphate (HK-MTPenyl-1-P), which is then dephosphorylated to form the acireductone 1,2-dihydroxy-3-keto-5-methylthiopentene (DHK-MTPene). The sequence is that of Enolase-phosphatase E1 (Enoph1) from Mus musculus (Mouse).